Here is a 454-residue protein sequence, read N- to C-terminus: tRNA modification GTPase MnmE (454 aa).

(6S)-5-formyl-5,6,7,8-tetrahydrofolate contacts are provided by Arg-23, Glu-80, and Lys-120. Residues 216–377 enclose the TrmE-type G domain; it reads GMKVVIAGRP…LRNHLKQSMG (162 aa). Asn-226 is a K(+) binding site. Residues 226 to 231, 245 to 251, 270 to 273, 335 to 338, and 358 to 360 each bind GTP; these read NAGKSS, TDIAGTT, DTAG, NKAD, and SAR. Position 230 (Ser-230) interacts with Mg(2+). K(+)-binding residues include Thr-245, Ile-247, and Thr-250. Residue Thr-251 coordinates Mg(2+). Lys-454 provides a ligand contact to (6S)-5-formyl-5,6,7,8-tetrahydrofolate.

Belongs to the TRAFAC class TrmE-Era-EngA-EngB-Septin-like GTPase superfamily. TrmE GTPase family. Homodimer. Heterotetramer of two MnmE and two MnmG subunits. Requires K(+) as cofactor.

It localises to the cytoplasm. Its function is as follows. Exhibits a very high intrinsic GTPase hydrolysis rate. Involved in the addition of a carboxymethylaminomethyl (cmnm) group at the wobble position (U34) of certain tRNAs, forming tRNA-cmnm(5)s(2)U34. This is tRNA modification GTPase MnmE from Escherichia coli (strain 55989 / EAEC).